The chain runs to 263 residues: Reductase pytE (263 aa).

The protein belongs to the avfA family.

It functions in the pathway secondary metabolite biosynthesis. Its function is as follows. Reductase; part of the gene cluster that mediates the biosynthesis of pyranterreones, a family of antioxidative compounds. The first step of pyranonigrins biosynthesis is performed by the hybrid PKS-NRPS synthetase pytA that condenses 4 malonyl-CoA units ato the acetyl starter unit by the modular PKS of pytA. The acyl chain is then connected to an L-serine through the amide bond by the modular NRPS of pytA. A tetramic acid is formed and released from the PKS-NRPS pytA to give pyranterreone 5 with the help of the thioesterase pytI. Pyranterreone 5 could be methylated by pytC to afford pyranterreone 6. Both pyranterreones 5 and 6 are subsequently oxidized by the FAD-linked oxidoreductase pytB and the cytochrome P450 monooxygenase pytD to form the fused gamma-pyrone core, resulting in pyranterreones 7 and 11, respectively. The hydroxy group at C-8 of pyranterreones 7 and 11 are dehydrated by the aspartyl protease pytH to form a delta-7 double bond to give pyranterreones 3 and 1, 2 accordingly. The exo-methylene of pyranterreone 3 could be reduced into a pendant methyl by reductase pytE to provide pyranterreone 4, also known as cordylactam. Pyranterreone 4 can be reconverted to pyranterreone 3 through pytB-catalyzed dehydrogenation or further oxidized to pyranterreones 9 and 10. In Aspergillus terreus, this protein is Reductase pytE.